A 472-amino-acid chain; its full sequence is MMPRTIIEKIWDRHVVKSGEGKPDLLYIDLHLIHEVTSPQAFEGLRQKGRKVRRPQNTFATMDHNIPTVNRFDIKDEVAKRQVTALERNCEEFGVRLADLHSADQGIVHVVGPELGLTLPGKTIVCGDSHTSTHGAFGALAFGIGTSEVEHVLSTQTLWQQRPKTLEIRVDGTLQKGVTAKDVILSVIGKYGVKFGTGYVIEYTGEVFRNMSMDERMTVCNMSIEAGARAGLIAPDDTTIEYCKNRKYAPKGEEFEKAAAEWKALKTDPGAVYDHSIVLDGSEISPMVTWGVNPGMVLPVDAQIPAPETIDSEDGKKEAIRAYEYMGISPNQKIEDIKVEHVFIGSCTNSRMTDLRQAADMIKGRKVADSVRAIVVPGSQSVKQQAEEEGLHRVFLEAGFEWRESGCSMCLSMNNDVVPEGERCASTSNRNFEGRQGKGARTHLVSPAMAAMAAIHGHFVDVRKFYQEKTVV.

The [4Fe-4S] cluster site is built by cysteine 347, cysteine 407, and cysteine 410.

This sequence belongs to the aconitase/IPM isomerase family. LeuC type 1 subfamily. As to quaternary structure, heterodimer of LeuC and LeuD. The cofactor is [4Fe-4S] cluster.

The catalysed reaction is (2R,3S)-3-isopropylmalate = (2S)-2-isopropylmalate. Its pathway is amino-acid biosynthesis; L-leucine biosynthesis; L-leucine from 3-methyl-2-oxobutanoate: step 2/4. Its function is as follows. Catalyzes the isomerization between 2-isopropylmalate and 3-isopropylmalate, via the formation of 2-isopropylmaleate. This is 3-isopropylmalate dehydratase large subunit from Bacillus velezensis (strain DSM 23117 / BGSC 10A6 / LMG 26770 / FZB42) (Bacillus amyloliquefaciens subsp. plantarum).